Consider the following 196-residue polypeptide: Adenylate kinase (196 aa).

9 to 17 lines the ATP pocket; that stretch reads GIPGVGKST.

The protein belongs to the archaeal adenylate kinase family.

The protein resides in the cytoplasm. The catalysed reaction is AMP + ATP = 2 ADP. The sequence is that of Adenylate kinase (adkA) from Pyrococcus horikoshii (strain ATCC 700860 / DSM 12428 / JCM 9974 / NBRC 100139 / OT-3).